The following is a 459-amino-acid chain: Cysteine--tRNA ligase (459 aa).

Cys28 is a Zn(2+) binding site. Residues Val30 to His40 carry the 'HIGH' region motif. Zn(2+)-binding residues include Cys209, His234, and Glu238. A 'KMSKS' region motif is present at residues Lys266–Ser270. Position 269 (Lys269) interacts with ATP.

This sequence belongs to the class-I aminoacyl-tRNA synthetase family. As to quaternary structure, monomer. Zn(2+) is required as a cofactor.

The protein resides in the cytoplasm. It catalyses the reaction tRNA(Cys) + L-cysteine + ATP = L-cysteinyl-tRNA(Cys) + AMP + diphosphate. The polypeptide is Cysteine--tRNA ligase (Histophilus somni (strain 129Pt) (Haemophilus somnus)).